A 304-amino-acid chain; its full sequence is MIYENLQNSRIEEKTQEPGKAPSQSFLWRILSWTHLLLFSLGLSLLLLVVVSVIGSQNSQLRRDLGTLRATLDNTTSKIKAEFQSLDSRADSFEKGISSLKVDVEDHRQELQAGRDLSQKVTSLESTVEKREQALKTDLSDLTDHVQQLRKDLKALTCQLANLKNNGSEVACCPLHWTEHEGSCYWFSESEKSWPEADKYCRLENSHLVVVNSLEEQNFLQNRLANVVSWIGLTDQNGPWRWVDGTDFEKGFKNWAPLQPDNWFGHGLGGGEDCAHITTGGPWNDDVCQRTFRWICEMKLAKES.

Over 1-35 (MIYENLQNSRIEEKTQEPGKAPSQSFLWRILSWTH) the chain is Cytoplasmic. A helical; Signal-anchor for type II membrane protein transmembrane segment spans residues 36 to 56 (LLLFSLGLSLLLLVVVSVIGS). The Extracellular segment spans residues 57 to 304 (QNSQLRRDLG…ICEMKLAKES (248 aa)). Residues asparagine 74 and asparagine 166 are each glycosylated (N-linked (GlcNAc...) asparagine). The region spanning 172 to 298 (CCPLHWTEHE…QRTFRWICEM (127 aa)) is the C-type lectin domain. Disulfide bonds link cysteine 173–cysteine 184, cysteine 201–cysteine 296, and cysteine 274–cysteine 288.

Homooligomer. Interacts with SIGLEC1, which may act as a counter-receptor for CLEC10A in lymph node. Detected in lymph node in the subcapsular sinus, interfollicular regions, T and B-cell boundary and in the areas surrounding high endothelial venules (at protein level). Expressed on the surface of activated macrophages. Expressed in heart, lung, testis, skeletal muscle, spleen, brain, kidney and thymus. Expressed in P388, RAW 264.7 and M1 cell lines.

The protein resides in the membrane. In terms of biological role, recognizes terminal galactose and N-acetylgalactosamine units. May participate in the interaction between tumoricidal macrophages and tumor cells. Plays a role in the recruitment of inflammatory monocytes to adipose tissue in diet-induced obesity. The polypeptide is C-type lectin domain family 10 member A (Clec10a) (Mus musculus (Mouse)).